Here is a 360-residue protein sequence, read N- to C-terminus: Glutamate 5-kinase (360 aa).

Lys-7 serves as a coordination point for ATP. 3 residues coordinate substrate: Ser-47, Asp-134, and Asn-146. ATP-binding positions include 166–167 and 210–216; these read TD and TGGITTK. Positions 275-348 constitute a PUA domain; sequence VGQITLDEGA…LNKKENINSS (74 aa).

It belongs to the glutamate 5-kinase family.

Its subcellular location is the cytoplasm. It catalyses the reaction L-glutamate + ATP = L-glutamyl 5-phosphate + ADP. It functions in the pathway amino-acid biosynthesis; L-proline biosynthesis; L-glutamate 5-semialdehyde from L-glutamate: step 1/2. Catalyzes the transfer of a phosphate group to glutamate to form L-glutamate 5-phosphate. In Prochlorococcus marinus subsp. pastoris (strain CCMP1986 / NIES-2087 / MED4), this protein is Glutamate 5-kinase.